Here is a 308-residue protein sequence, read N- to C-terminus: Tetraspanin-12 (308 aa).

Residues 1 to 41 (MANRRQPVQHRAQQRVYRQSQIRYAPGAGGESEISCCVKYS) lie on the Cytoplasmic side of the membrane. A helical membrane pass occupies residues 42-62 (VFSFNVIFFLLGFGLLLFGVW). The Extracellular segment spans residues 63–86 (AQIEKNTFVNMLSKASKLYLDPTW). A helical transmembrane segment spans residues 87–107 (PLLIVGFLTFIIGFSGCVGSL). Residues 108-112 (RENTS) lie on the Cytoplasmic side of the membrane. Residues 113–133 (FLTFYSTLLGLLLIAEFSAGV) traverse the membrane as a helical segment. The Extracellular segment spans residues 134–268 (FAYACRDQLD…PKLQLWLNNN (135 aa)). An N-linked (GlcNAc...) asparagine glycan is attached at asparagine 213. Residues 269 to 289 (MLLVAVSMVIIAIIQVLGICF) traverse the membrane as a helical segment. The Cytoplasmic segment spans residues 290–308 (AQNLKSDILAQRAKWYYTH).

It belongs to the tetraspanin (TM4SF) family. As to quaternary structure, may interact with protease sup-17; the interaction promotes sup-17 cell membrane localization. Expressed in the germline.

The protein resides in the cell membrane. It is found in the cytoplasmic vesicle membrane. The protein localises to the endosome membrane. Its subcellular location is the early endosome membrane. It localises to the late endosome membrane. The protein resides in the recycling endosome membrane. It is found in the golgi apparatus. The protein localises to the trans-Golgi network membrane. Its function is as follows. Functions redundantly with tsp-14 isoform a to regulate body size, embryonic and vulva development. Functions redundantly with tsp-14 (isoforms a and b) to regulate cell fate specification in the postembryonic mesodermal M lineage and male development. May regulate BMP-like Sma/Mab signaling by mediating protease sup-17 trafficking to the cell surface. Together with tsp-14, functions redundantly to maintain cell surface levels of the BMP type II receptor daf-4 (but not BMP type I receptor sma-6), probably by regulating endosomal sorting of receptors and their targeting to degradative lysosomes. Together with tsp-14 involved in maintaining the structural and functional integrity of the endosomal network. Together with tsp-14, probably acts by modulating the activation of glp-1, a Notch-like receptor, to regulate germline maturation. Probably acts by modulating the activation of lin-12, a Notch-like receptor, to regulate cell fate specification such as the anchor cell/ventral uterine precursor cell decision. The polypeptide is Tetraspanin-12 (Caenorhabditis elegans).